The sequence spans 286 residues: Beta-lactamase SHV-13 (286 aa).

A signal peptide spans 1–21 (MRYIRLCIISLLATLPLAVHA). S66 (acyl-ester intermediate) is an active-site residue. A disulfide bridge links C73 with C119. The active-site Proton acceptor is the E164. 230–232 (KTG) is a substrate binding site.

Belongs to the class-A beta-lactamase family.

The catalysed reaction is a beta-lactam + H2O = a substituted beta-amino acid. Its activity is regulated as follows. Inhibited 16-fold better by the beta-lactamase inhibitor clavulanic acid than by tazobactam. Its function is as follows. Broad spectrum beta-lactamase which hydrolyzes penicillins, as well as cephalosporins except cephamycins. Also hydrolyzes aztreonam, but not imipenem. Confers highly resistance to ceftazidime, cefotaxime, aztreonam and piperacillin. The chain is Beta-lactamase SHV-13 (bla) from Klebsiella pneumoniae.